A 225-amino-acid chain; its full sequence is Single-pass membrane and coiled-coil domain-containing protein 3 (225 aa).

The stretch at 69–92 (IIQAMTKIQKELQKIDEALKDQLE) forms a coiled coil. Residues 155 to 175 (IGTSLLGSIGVAVLSLGIDMI) form a helical membrane-spanning segment. The stretch at 182–209 (AVERTQLQAAIKSYEKHLEEFKAASAKY) forms a coiled coil.

The protein localises to the membrane. This Mus musculus (Mouse) protein is Single-pass membrane and coiled-coil domain-containing protein 3 (Smco3).